The sequence spans 114 residues: Large ribosomal subunit protein bL19 (114 aa).

Belongs to the bacterial ribosomal protein bL19 family.

This protein is located at the 30S-50S ribosomal subunit interface and may play a role in the structure and function of the aminoacyl-tRNA binding site. In Halalkalibacterium halodurans (strain ATCC BAA-125 / DSM 18197 / FERM 7344 / JCM 9153 / C-125) (Bacillus halodurans), this protein is Large ribosomal subunit protein bL19.